A 421-amino-acid polypeptide reads, in one-letter code: Periplasmic [Fe] hydrogenase large subunit (421 aa).

2 4Fe-4S ferredoxin-type domains span residues 26–57 and 59–86; these read HFVQ…MGEP and SIPH…EAQS. Residues Cys-35, Cys-38, Cys-41, Cys-45, Cys-66, Cys-69, Cys-72, Cys-76, Cys-179, Cys-234, Cys-378, and Cys-382 each contribute to the [4Fe-4S] cluster site. A Fe(2+)-binding site is contributed by Cys-382.

In terms of assembly, heterodimer of a large and a small subunit. [4Fe-4S] cluster is required as a cofactor. It depends on Fe(2+) as a cofactor.

The protein localises to the periplasm. It carries out the reaction H2 + 2 oxidized [2Fe-2S]-[ferredoxin] = 2 reduced [2Fe-2S]-[ferredoxin] + 2 H(+). Functionally, may be involved in hydrogen uptake for the reduction of sulfate to hydrogen sulfide in an electron transport chain. Cytochrome c3 is likely to be the physiological electron carrier for the enzyme. The chain is Periplasmic [Fe] hydrogenase large subunit (hydA) from Nitratidesulfovibrio vulgaris (strain ATCC 29579 / DSM 644 / CCUG 34227 / NCIMB 8303 / VKM B-1760 / Hildenborough) (Desulfovibrio vulgaris).